A 415-amino-acid polypeptide reads, in one-letter code: Multidrug resistance protein MdtA (415 aa).

A signal peptide spans 1-21 (MKGSYKSRWVIVIVVVIAAIA). The segment covering 31 to 47 (DSQSAAPGATKQAQQSP) has biased composition (polar residues). 2 disordered regions span residues 31 to 60 (DSQS…GPLA) and 392 to 415 (EAQS…GARS). Basic and acidic residues predominate over residues 399–415 (SEEKATSREYAKKGARS).

Belongs to the membrane fusion protein (MFP) (TC 8.A.1) family. Part of a tripartite efflux system composed of MdtA, MdtB and MdtC.

Its subcellular location is the cell inner membrane. In terms of biological role, the MdtABC tripartite complex confers resistance against novobiocin and deoxycholate. This is Multidrug resistance protein MdtA from Escherichia coli O139:H28 (strain E24377A / ETEC).